A 456-amino-acid chain; its full sequence is UDP-N-acetylmuramate--L-alanine ligase (456 aa).

Residue 118–124 (GTHGKST) participates in ATP binding.

Belongs to the MurCDEF family.

Its subcellular location is the cytoplasm. The catalysed reaction is UDP-N-acetyl-alpha-D-muramate + L-alanine + ATP = UDP-N-acetyl-alpha-D-muramoyl-L-alanine + ADP + phosphate + H(+). The protein operates within cell wall biogenesis; peptidoglycan biosynthesis. In terms of biological role, cell wall formation. The chain is UDP-N-acetylmuramate--L-alanine ligase from Paenarthrobacter aurescens (strain TC1).